Consider the following 388-residue polypeptide: Succinate--CoA ligase [ADP-forming] subunit beta (388 aa).

An ATP-grasp domain is found at 9-244 (KQLFAEYGLP…PSQDDPREAH (236 aa)). Residues K46, 53-55 (GRG), E99, T102, and E107 contribute to the ATP site. Positions 199 and 213 each coordinate Mg(2+). Residues N264 and 321–323 (GIV) contribute to the substrate site.

This sequence belongs to the succinate/malate CoA ligase beta subunit family. In terms of assembly, heterotetramer of two alpha and two beta subunits. It depends on Mg(2+) as a cofactor.

It carries out the reaction succinate + ATP + CoA = succinyl-CoA + ADP + phosphate. The catalysed reaction is GTP + succinate + CoA = succinyl-CoA + GDP + phosphate. The protein operates within carbohydrate metabolism; tricarboxylic acid cycle; succinate from succinyl-CoA (ligase route): step 1/1. Its function is as follows. Succinyl-CoA synthetase functions in the citric acid cycle (TCA), coupling the hydrolysis of succinyl-CoA to the synthesis of either ATP or GTP and thus represents the only step of substrate-level phosphorylation in the TCA. The beta subunit provides nucleotide specificity of the enzyme and binds the substrate succinate, while the binding sites for coenzyme A and phosphate are found in the alpha subunit. This is Succinate--CoA ligase [ADP-forming] subunit beta from Pseudomonas fluorescens (strain SBW25).